The sequence spans 322 residues: RNA-binding protein KhpB (322 aa).

The interval 3–52 is jag_N domain; that stretch reads VFEGNTVAAAIAAGLKQLHRTRDQVEVEVIAEAKKGFLGLGKHPAQVRLT. Low complexity predominate over residues 58–82; the sequence is AAPATTPTSATATAQQSVATESTTA. The interval 58–162 is disordered; the sequence is AAPATTPTSA…AADQSQTPRT (105 aa). Thr89 carries the post-translational modification Phosphothreonine. A compositionally biased stretch (polar residues) spans 89–99; that stretch reads TVQTPKSTPTR. The span at 100–129 shows a compositional bias: low complexity; the sequence is QAKTSQATTSAAKPATSKAKAVAKPASMAV. The span at 141-161 shows a compositional bias: polar residues; sequence SKPATTSKTKSVAADQSQTPR. Residues 174–251 form the KH domain; sequence ETAVRALCDY…ASHVNVVLDV (78 aa). Residues 256–322 enclose the R3H domain; it reads ERRAATLKRL…HRAVVVAIRK (67 aa).

As to quaternary structure, forms a complex with KhpA.

Its subcellular location is the cytoplasm. A probable RNA chaperone. Forms a complex with KhpA which binds to cellular RNA and controls its expression. Plays a role in peptidoglycan (PG) homeostasis and cell length regulation. Functionally, necessary for correct cell elongation. This Lactiplantibacillus plantarum (strain ATCC BAA-793 / NCIMB 8826 / WCFS1) (Lactobacillus plantarum) protein is RNA-binding protein KhpB.